We begin with the raw amino-acid sequence, 460 residues long: Cysteine proteinase 7 (460 aa).

Positions methionine 1–alanine 17 are cleaved as a signal peptide. The propeptide at lysine 18–serine 111 is activation peptide. Disulfide bonds link cysteine 131–cysteine 176 and cysteine 167–cysteine 210. The active site involves cysteine 134. Residues asparagine 226 and asparagine 252 are each glycosylated (N-linked (GlcNAc...) asparagine). The cysteines at positions 268 and 445 are disulfide-linked. The active site involves histidine 275. Residues glycine 285–glycine 409 form a disordered region. Low complexity predominate over residues glycine 294–glycine 359. Residues alanine 367 to serine 385 are compositionally biased toward gly residues. The span at valine 386–glycine 409 shows a compositional bias: low complexity. Asparagine 423 is a catalytic residue.

The protein belongs to the peptidase C1 family. Post-translationally, glycosylated; contains GlcNAc-alpha-1-P-Ser residues. Also N-glycosylated.

It localises to the lysosome. This chain is Cysteine proteinase 7 (cprG), found in Dictyostelium discoideum (Social amoeba).